Here is a 367-residue protein sequence, read N- to C-terminus: tRNA (cytosine(34)-C(5))-methyltransferase, mitochondrial (367 aa).

Residues 170-176 (CAAPGGK), E193, D224, and D242 each bind S-adenosyl-L-methionine. The active-site Nucleophile is the C296.

The protein belongs to the class I-like SAM-binding methyltransferase superfamily. RsmB/NOP family.

Its subcellular location is the mitochondrion matrix. It carries out the reaction cytidine(34) in mitochondrial tRNA + S-adenosyl-L-methionine = 5-methylcytidine(34) in mitochondrial tRNA + S-adenosyl-L-homocysteine + H(+). Functionally, mitochondrial tRNA methyltransferase that mediates methylation of cytosine to 5-methylcytosine (m5C) at position 34 of mt-tRNA(Met). mt-tRNA(Met) methylation at cytosine(34) takes place at the wobble position of the anticodon and initiates the formation of 5-formylcytosine (f(5)c) at this position. mt-tRNA(Met) containing the f(5)c modification at the wobble position enables recognition of the AUA codon in addition to the AUG codon, expanding codon recognition in mitochondrial translation. The protein is tRNA (cytosine(34)-C(5))-methyltransferase, mitochondrial of Danio rerio (Zebrafish).